The primary structure comprises 490 residues: MSQSVSERTRIKSDRYESGVIPYAKMGYWDAAYTVKDTDVLALFRITPQPGVDPVEAAAAVAGESSTATWTVVWTDLLTACERYRAKAYRVDPVPSATDQYFAFIAYECDLFEEASLSNLTASIIGNVFGFKAISALRLEDMRIPHSYLKTFQGPATGIVVERERLNKYGTPLLGATVKPKLGLSGKNYGRVVYEGLKGGLDFLKDDENINSQPFMRWRERFLNCLEGINRASAATGEVKGSYLNITAATMEEVYKRAEYAKMIGSVIVMIDLVMGYTAIQSIAYWARENDMLLHLHRAGNSTYARQKNHGINFRVICKWMRMSGVDHIHAGTVVGKLEGDPLMIKGFYDILRLTELEVNLPFGIFFEMDWASLRRCMPVASGGIHCGQMHQLIHYLGDDVVLQFGGGTIGHPDGIQAGATANRVALEAMVLARNEGLDYFNQQVGPQILRDAAKTCGPLQTALDLWKDISFNYTSTDTADFAETATANR.

Substrate-binding residues include asparagine 127 and threonine 177. The Proton acceptor role is filled by lysine 179. A substrate-binding site is contributed by lysine 181. Mg(2+)-binding residues include lysine 205, aspartate 207, and glutamate 208. At lysine 205 the chain carries N6-carboxylysine. The Proton acceptor role is filled by histidine 297. Substrate is bound by residues arginine 298, histidine 330, and serine 382.

This sequence belongs to the RuBisCO large chain family. Type I subfamily. As to quaternary structure, heterohexadecamer of 8 large chains and 8 small chains. The cofactor is Mg(2+).

It localises to the plastid. It is found in the chloroplast. It carries out the reaction 2 (2R)-3-phosphoglycerate + 2 H(+) = D-ribulose 1,5-bisphosphate + CO2 + H2O. The catalysed reaction is D-ribulose 1,5-bisphosphate + O2 = 2-phosphoglycolate + (2R)-3-phosphoglycerate + 2 H(+). RuBisCO catalyzes two reactions: the carboxylation of D-ribulose 1,5-bisphosphate, the primary event in carbon dioxide fixation, as well as the oxidative fragmentation of the pentose substrate in the photorespiration process. Both reactions occur simultaneously and in competition at the same active site. The protein is Ribulose bisphosphate carboxylase large chain of Thalassiosira pseudonana (Marine diatom).